Here is a 584-residue protein sequence, read N- to C-terminus: MGKTYSSPINPIPKAPKGLAIHHWLNFLQAAYRLQPGPSEFDFHQLRKFLKLAIKTPVWLNPINYSVLAGLIPKNYPGRVHEIVAILIQETPAREAPPSAPLAEDPQKPPPYPEQAQEASQCLPILHPHGAPAAHRPWQMKDLQAIKQEVSSSAPGSPQFMQTIRLAVQQFDPTAKDLHDLLQYLCSSLVASLHHQQLETLIAQAETQGITGYNPLAGPLRIQANNPNQQGLRKEYQNLWLSAFSALPGNTKDPTWAAILQGPEEPFGSFVERLNVALDNGLPEGTPKDPILRSLAYSNANKECQKLLQARGQTNSPLGEMLRACQTWTPRDKNKILMVQPKKTPPPNQPCFRCGQVGHWSRDCKQPRPPPGPCPVCQDPTHWKRDCPQLKTDTRDSEDLLLDLPCEAPNVRERKNLLRGGGLASPRTILPLIPLSQQKQPTLHIQVSFSNTPPVSVQALLDTGADITVLPACLCPPDSNLQDTTVLGAGGPSTNKFKILPCPVHIHLPFRRQPVTLTACLIDINNQWTILGRDALQQCQSSLYLADQPSKVLPVLAPKLIGLEHLPPPPEVSQFPLNQSASRL.

G2 carries the N-myristoyl glycine; by host lipid modification. The disordered stretch occupies residues 95–116; that stretch reads EAPPSAPLAEDPQKPPPYPEQA. Positions 98–101 match the PTAP/PSAP motif motif; the sequence is PSAP. A PPXY motif motif is present at residues 109 to 112; that stretch reads PPPY. 2 consecutive CCHC-type zinc fingers follow at residues 349–366 and 372–389; these read QPCF…DCKQ and GPCP…DCPQ. The region spanning 457–535 is the Peptidase A2 domain; it reads VQALLDTGAD…NQWTILGRDA (79 aa). Residue D462 is the For protease activity; shared with dimeric partner of the active site.

As to quaternary structure, interacts with human TSG101. This interaction is essential for budding and release of viral particles. Specific enzymatic cleavages by the viral protease yield mature proteins. The polyprotein is cleaved during and after budding, this process is termed maturation. The protease is autoproteolytically processed at its N- and C-termini.

The protein localises to the virion. Its function is as follows. Matrix protein p19 targets Gag, Gag-Pro and Gag-Pro-Pol polyproteins to the plasma membrane via a multipartite membrane binding signal, that includes its myristoylated N-terminus. Also mediates nuclear localization of the preintegration complex. Functionally, capsid protein p24 forms the conical core of the virus that encapsulates the genomic RNA-nucleocapsid complex. In terms of biological role, nucleocapsid protein p15 is involved in the packaging and encapsidation of two copies of the genome. The aspartyl protease mediates proteolytic cleavages of Gag, Gag-Pro and Gag-Pro-Pol polyproteins during or shortly after the release of the virion from the plasma membrane. Cleavages take place as an ordered, step-wise cascade to yield mature proteins. This process is called maturation. Displays maximal activity during the budding process just prior to particle release from the cell. Hydrolyzes host EIF4GI in order to shut off the capped cellular mRNA translation. The resulting inhibition of cellular protein synthesis serves to ensure maximal viral gene expression and to evade host immune response. The protein is Gag-Pro polyprotein (gag-pro) of Homo sapiens (Human).